A 294-amino-acid chain; its full sequence is Nucleotide-binding protein CLJ_B3680 (294 aa).

Position 8 to 15 (8 to 15) interacts with ATP; the sequence is GLSGAGKT. 59 to 62 provides a ligand contact to GTP; it reads DIRG.

Belongs to the RapZ-like family.

Displays ATPase and GTPase activities. This is Nucleotide-binding protein CLJ_B3680 from Clostridium botulinum (strain 657 / Type Ba4).